Here is a 377-residue protein sequence, read N- to C-terminus: Beta sliding clamp (377 aa).

This sequence belongs to the beta sliding clamp family. Forms a ring-shaped head-to-tail homodimer around DNA which binds and tethers DNA polymerases and other proteins to the DNA. The DNA replisome complex has a single clamp-loading complex (3 tau and 1 each of delta, delta', psi and chi subunits) which binds 3 Pol III cores (1 core on the leading strand and 2 on the lagging strand) each with a beta sliding clamp dimer. Additional proteins in the replisome are other copies of gamma, psi and chi, Ssb, DNA helicase and RNA primase.

It is found in the cytoplasm. Functionally, confers DNA tethering and processivity to DNA polymerases and other proteins. Acts as a clamp, forming a ring around DNA (a reaction catalyzed by the clamp-loading complex) which diffuses in an ATP-independent manner freely and bidirectionally along dsDNA. Initially characterized for its ability to contact the catalytic subunit of DNA polymerase III (Pol III), a complex, multichain enzyme responsible for most of the replicative synthesis in bacteria; Pol III exhibits 3'-5' exonuclease proofreading activity. The beta chain is required for initiation of replication as well as for processivity of DNA replication. This Staphylococcus epidermidis (strain ATCC 35984 / DSM 28319 / BCRC 17069 / CCUG 31568 / BM 3577 / RP62A) protein is Beta sliding clamp (dnaN).